The chain runs to 158 residues: HTH-type transcriptional repressor NicR (158 aa).

The 133-residue stretch at Thr20–Asp152 folds into the HTH marR-type domain. A DNA-binding region (H-T-H motif) is located at residues Gln66–Ala89.

It functions in the pathway cofactor degradation; nicotinate degradation [regulation]. Functionally, transcriptional repressor for the nicCDEFTP and nicXR operons, encoding the lower aerobic nicotinate degradation pathway. Acts under non-induced conditions: repression of the nicCDEFTP and nicXR operons becomes alleviated in presence of 6-hydroxynicotinate (6HNA). The sequence is that of HTH-type transcriptional repressor NicR (nicR) from Pseudomonas putida (strain ATCC 47054 / DSM 6125 / CFBP 8728 / NCIMB 11950 / KT2440).